The sequence spans 480 residues: Transposase for transposon Tn552 (480 aa).

Residues 36–55 (LSSISKSKGIALSTLYRWNK) constitute a DNA-binding region (H-T-H motif). Positions 155–341 (ESSRPNEIWQ…TPINRWNSNH (187 aa)) constitute an Integrase catalytic domain. Positions 438–480 (RKHLKQNIASPSTTDLIKEEKSYGYSPQETTKNVKKLKRYRND) are disordered. Positions 470–480 (NVKKLKRYRND) are enriched in basic residues.

The sequence is that of Transposase for transposon Tn552 from Staphylococcus aureus.